The chain runs to 618 residues: Probable protein disulfide-isomerase A4 (618 aa).

The signal sequence occupies residues 1 to 21 (MMFDRRFFALVVLLCVSAVRS). Thioredoxin domains follow at residues 22-139 (TEDA…SRVD), 138-254 (VDPN…DQSK), and 480-609 (SSGK…KHGV). Disulfide bonds link Cys65/Cys68, Cys176/Cys179, and Cys529/Cys532. The Prevents secretion from ER signature appears at 615-618 (KDEL).

This sequence belongs to the protein disulfide isomerase family.

It is found in the endoplasmic reticulum lumen. The catalysed reaction is Catalyzes the rearrangement of -S-S- bonds in proteins.. In Caenorhabditis elegans, this protein is Probable protein disulfide-isomerase A4.